The chain runs to 292 residues: Probable septum site-determining protein MinC (292 aa).

Residues 112-188 are disordered; the sequence is DTAPPNDVAT…PQSSSALVIT (77 aa). The segment covering 128–137 has biased composition (low complexity); sequence EATAEAAAKA. Residues 140–150 are compositionally biased toward acidic residues; it reads QDDEAYGEQAD. Over residues 171 to 185 the composition is skewed to polar residues; sequence ANRPTATPPQSSSAL.

This sequence belongs to the MinC family. Interacts with MinD and FtsZ.

In terms of biological role, cell division inhibitor that blocks the formation of polar Z ring septums. Rapidly oscillates between the poles of the cell to destabilize FtsZ filaments that have formed before they mature into polar Z rings. Prevents FtsZ polymerization. The protein is Probable septum site-determining protein MinC of Bordetella bronchiseptica (strain ATCC BAA-588 / NCTC 13252 / RB50) (Alcaligenes bronchisepticus).